A 442-amino-acid polypeptide reads, in one-letter code: Sexual development regulator VELC (442 aa).

Disordered stretches follow at residues 1 to 192 (MPVH…ASLA) and 396 to 442 (KKGN…IRRS). Over residues 45-54 (IAPPPPPTPP) the composition is skewed to pro residues. Residues 79–97 (PGPRRPSNPSSPQHPQQPG) are compositionally biased toward low complexity. The region spanning 213 to 396 (FSTSEYHLHV…KEQGCLISIK (184 aa)) is the Velvet domain. Over residues 401–411 (KGGGGGGGGPS) the composition is skewed to gly residues. Residues 433–442 (AGKRKRIRRS) show a composition bias toward basic residues.

Belongs to the velvet family. VelC subfamily.

The protein localises to the nucleus. Velvet-domain-containing protein that acts as a positive regulator of sexual development. Plays an important role in pathogenicity through regulating positively appressorium-mediated penetration and invasive growth. The chain is Sexual development regulator VELC from Pyricularia oryzae (strain 70-15 / ATCC MYA-4617 / FGSC 8958) (Rice blast fungus).